Reading from the N-terminus, the 105-residue chain is Protein LITTLE ZIPPER 2 (105 aa).

The interval 1–20 (MCLTTSEPPFPDTDTPTMRS) is disordered. Residues 39–60 (NLTRRRRLLKEQKEMEMRNLKL) adopt a coiled-coil conformation.

As to quaternary structure, interacts with REV.

Competitive inhibitor of the HD-ZIPIII transcription factors in shoot apical meristem (SAM) development. Acts by forming non-functional heterodimers. Part of a negative feedback loop. Essential for proper functioning of stem cells in the SAM. The protein is Protein LITTLE ZIPPER 2 of Arabidopsis thaliana (Mouse-ear cress).